The chain runs to 713 residues: Glycine--tRNA ligase beta subunit (713 aa).

Belongs to the class-II aminoacyl-tRNA synthetase family. In terms of assembly, tetramer of two alpha and two beta subunits.

It localises to the cytoplasm. The catalysed reaction is tRNA(Gly) + glycine + ATP = glycyl-tRNA(Gly) + AMP + diphosphate. In Leptothrix cholodnii (strain ATCC 51168 / LMG 8142 / SP-6) (Leptothrix discophora (strain SP-6)), this protein is Glycine--tRNA ligase beta subunit.